The primary structure comprises 313 residues: Ketimine reductase mu-crystallin (313 aa).

Arginine 47 lines the 3,3',5-triiodo-L-thyronine pocket. NADPH is bound by residues serine 90, histidine 91, arginine 118, alanine 143, valine 145, glutamine 146, asparagine 167, arginine 168, threonine 169, asparagine 172, threonine 204, methionine 205, and valine 225. Glutamate 256 lines the 3,3',5-triiodo-L-thyronine pocket. NADPH is bound at residue serine 291.

The protein belongs to the ornithine cyclodeaminase/mu-crystallin family. As to quaternary structure, homodimer. Binds the thyroid hormone triiodothyronine (T3); T3 binding inhibits enzymatic activity.

It is found in the cytoplasm. It carries out the reaction L-pipecolate + NADP(+) = Delta(1)-piperideine-2-carboxylate + NADPH + H(+). The catalysed reaction is L-pipecolate + NAD(+) = Delta(1)-piperideine-2-carboxylate + NADH + H(+). The enzyme catalyses L-proline + NADP(+) = 1-pyrroline-2-carboxylate + NADPH + H(+). It catalyses the reaction L-proline + NAD(+) = 1-pyrroline-2-carboxylate + NADH + H(+). It carries out the reaction (3R)-1,4-thiomorpholine-3-carboxylate + NAD(+) = 3,4-dehydrothiomorpholine-3-carboxylate + NADH + 2 H(+). The catalysed reaction is (3R)-1,4-thiomorpholine-3-carboxylate + NADP(+) = 3,4-dehydrothiomorpholine-3-carboxylate + NADPH + 2 H(+). The enzyme catalyses (S)-cystathionine ketimine + NADH + 2 H(+) = (3R,5S)-2,3,5,6,7-pentahydro-1,4-thiazepine-3,5-dicarboxylate + NAD(+). It catalyses the reaction (S)-cystathionine ketimine + NADPH + 2 H(+) = (3R,5S)-2,3,5,6,7-pentahydro-1,4-thiazepine-3,5-dicarboxylate + NADP(+). It carries out the reaction (R)-lanthionine ketimine + NADPH + 2 H(+) = (3R,5R)-1,4-thiomorpholine-3,5-dicarboxylate + NADP(+). The catalysed reaction is Delta(2)-thiazoline-2-carboxylate + NADPH + 2 H(+) = L-thiazolidine-2-carboxylate + NADP(+). Catalyzes the NAD(P)H-dependent reduction of imine double bonds of a number of cyclic ketimine substrates, including sulfur-containing cyclic ketimines. Under physiological conditions, it efficiently catalyzes delta(1)-piperideine-2-carboxylate (P2C) and delta(1)-pyrroline-2-carboxylate (Pyr2C) reduction, suggesting a central role in lysine and glutamate metabolism. Additional substrates are delta(2)-thiazoline-2-carboxylate (T2C), 3,4-dehydrothiomorpholine-3-carboxylate (AECK), and (R)-lanthionine ketimine (LK) that is reduced at very low rate compared to other substrates. Also catalyzes the NAD(P)H-dependent reduction of (S)-cystathionine ketimine (CysK). This Rattus norvegicus (Rat) protein is Ketimine reductase mu-crystallin.